The sequence spans 437 residues: Putative ABC transporter ATP-binding protein CTC_00753 (437 aa).

2 ABC transporter domains span residues 1–143 (MERE…LPTI) and 179–416 (LKFK…QISK). An ATP-binding site is contributed by 219–226 (GENGAGKS).

It belongs to the ABC transporter superfamily.

Its subcellular location is the cell membrane. Probably part of an ABC transporter complex. Responsible for energy coupling to the transport system. This Clostridium tetani (strain Massachusetts / E88) protein is Putative ABC transporter ATP-binding protein CTC_00753.